Reading from the N-terminus, the 192-residue chain is Probable GTP-binding protein EngB (192 aa).

The EngB-type G domain maps to 22–192 (SLPEIVFVGR…LLEQLENYTG (171 aa)). Residues 30-37 (GRSNVGKS), 57-61 (GKTQL), 75-78 (DLPG), 142-145 (TKYD), and 172-174 (YSA) each bind GTP. Mg(2+) is bound by residues Ser-37 and Thr-59.

The protein belongs to the TRAFAC class TrmE-Era-EngA-EngB-Septin-like GTPase superfamily. EngB GTPase family. The cofactor is Mg(2+).

Its function is as follows. Necessary for normal cell division and for the maintenance of normal septation. In Prosthecochloris aestuarii (strain DSM 271 / SK 413), this protein is Probable GTP-binding protein EngB.